The sequence spans 172 residues: Large ribosomal subunit protein uL10 (172 aa).

Belongs to the universal ribosomal protein uL10 family. Part of the ribosomal stalk of the 50S ribosomal subunit. The N-terminus interacts with L11 and the large rRNA to form the base of the stalk. The C-terminus forms an elongated spine to which L12 dimers bind in a sequential fashion forming a multimeric L10(L12)X complex.

Functionally, forms part of the ribosomal stalk, playing a central role in the interaction of the ribosome with GTP-bound translation factors. This is Large ribosomal subunit protein uL10 from Chelativorans sp. (strain BNC1).